We begin with the raw amino-acid sequence, 1247 residues long: MQYVNGNDISSQSIHEVLELAFSTKIPWTKLEYESSEKHIIHSYSSHERGIYLSKGVAEFNISPENMYELLLDISSRSKWDFHCREAHIIEEYDHLNHIIHLNFTNPLISNLDMNLYRSCKYDPQERLFVIAMRSIELEDGDVDQFECLPNGWVIQGLRGQKDKCKMTFVQQCDLRDIELQRIPGYKSFNSKERLEDFQFLTLFPATVSGRLAKIFESIELYISNNVKDIETKDIRISIMEKAEKEVNEMFGTTNPDYGWKIYLKKLDMEILIKKTTSGYYMIGKGSFSSRYSPELLADVLYQKNPFEWDTFYDKTKLVESINSSIREVEVHYRMWRNTITMRLLQSVKKGPGNFSSVHWRSICSPNYQVADGIEVHYLPTALLNYGLGDGSFTSFLAAIEVKGYPTPWEEEMVTKMFAARIISNQNSIINHVNKLTGGSEMIRELPVIPSVQHHCGDVGSHIGTPQVYNAMVENFADILLDEGNKDGNVVSSKNKRKRNKNNENKNNNNDNIIDEEIEQEEENIEKDQQQTQQQQTQKQQQQQQQQQKTQQQPQQQQQQPQEQQQNHSQLKKEIKPTRPSIRFTYLLSNSSSGQRPIAWYESKKQPFLFLVSDSSERKGKIQRKTYYFSNSGFDNLPEEVVQIIFSNLSAINIVNLSLVCKRFKMATDSPILWKNLYKSNPLFHKKTPKRKQIIHSNLSNDENKVNSNSGDSADGSSSQEEEEQQQQNQQQNQQQNQQQQQQQTFDLSNINLNDPISLLMVFTNGIIPQNLSPTEIINVGGIVSQIDLNDLSNVETLIQQLPHQVLSLIQMNTLDAKIQHLSMISGMPATIGQESPINKNSSDNPKPNAYNKRDNNSYIPDEEFINWKSHYTEKHKQSKRWVNMEPIRITPLKGHNRAIKAVKSEGNSAITVSTEKKIKFWNLNTGQCIGDYEGESGVLSVEYDHTQKSSCIWPLSDYTKVHIGHKNGTVTMVDFIEQPIEVIHTSRPTNLADGFDFTFPGKYLIWEHTIIHYWDVETSTLLWNELNAHTKKITQSKIVAQHELSNKGIVFTTSSDKSAKVWDLTNGTCINTLVGHSYAVNCIEPIGDYMALTGSTDKTLKLWDLRQASTFISSYSTKHTGPIRCISYQEKNGIVLSGSDDGSIIAFNLDNWNLSNISVVKKPIFNNVIGNIGTTTTTTTTTTTTTTTTTSTTNNTNVPEIPKINLGTFKDSKRLHNHESAVTCIESDEAGFISGSQNGLVLRWDF.

One can recognise an START domain in the interval M1 to K214. Disordered regions lie at residues G484–I514 and Q552–K576. Low complexity predominate over residues Q552 to Q566. The F-box domain occupies N631–L677. 2 disordered regions span residues S697–Q744 and G833–N856. Composition is skewed to low complexity over residues N707 to S719 and Q726 to Q744. Residues G833 to P846 show a composition bias toward polar residues. 7 WD repeats span residues G895–E934, D945–I984, R988–N1025, A1029–T1073, G1076–S1114, K1119–I1158, and N1218–F1247.

Component of an SCF complex including at least culA. Formation of this complex appears to require activity of the MAP kinase erk2. Interacts with regA.

Its function is as follows. Substrate recognition component of a SCF (SKP1-CUL1-F-box protein) E3 ubiquitin-protein ligase complex which mediates the ubiquitination and subsequent proteasomal degradation of target proteins. May target the cAMP phosphodiesterase regA for degradation leading to an increase in cAMP and PKA activity. Promotes development of prestalk cells as opposed to prespores within the developing fruiting body. Required for culmination and fruiting body development. In Dictyostelium discoideum (Social amoeba), this protein is F-box/WD repeat-containing protein A (fbxA).